A 263-amino-acid chain; its full sequence is Small ribosomal subunit protein eS1 (263 aa).

The span at 236 to 254 (GDGKGGSDEPGARVDRPEG) shows a compositional bias: basic and acidic residues. A disordered region spans residues 236–263 (GDGKGGSDEPGARVDRPEGYEPPVQETV).

This sequence belongs to the eukaryotic ribosomal protein eS1 family. In terms of assembly, component of the small ribosomal subunit. Mature ribosomes consist of a small (40S) and a large (60S) subunit. The 40S subunit contains about 33 different proteins and 1 molecule of RNA (18S). The 60S subunit contains about 49 different proteins and 3 molecules of RNA (28S, 5.8S and 5S).

The protein resides in the cytoplasm. This is Small ribosomal subunit protein eS1 from Periplaneta americana (American cockroach).